The following is a 209-amino-acid chain: Orotate phosphoribosyltransferase (209 aa).

5-phospho-alpha-D-ribose 1-diphosphate contacts are provided by residues R96, K100, H102, and 122–130 (EDLISTGGS). S126 provides a ligand contact to orotate.

The protein belongs to the purine/pyrimidine phosphoribosyltransferase family. PyrE subfamily. Homodimer. It depends on Mg(2+) as a cofactor.

The enzyme catalyses orotidine 5'-phosphate + diphosphate = orotate + 5-phospho-alpha-D-ribose 1-diphosphate. The protein operates within pyrimidine metabolism; UMP biosynthesis via de novo pathway; UMP from orotate: step 1/2. Catalyzes the transfer of a ribosyl phosphate group from 5-phosphoribose 1-diphosphate to orotate, leading to the formation of orotidine monophosphate (OMP). The protein is Orotate phosphoribosyltransferase of Streptococcus sanguinis (strain SK36).